A 177-amino-acid chain; its full sequence is Large ribosomal subunit protein uL6 (177 aa).

The protein belongs to the universal ribosomal protein uL6 family. Part of the 50S ribosomal subunit.

This protein binds to the 23S rRNA, and is important in its secondary structure. It is located near the subunit interface in the base of the L7/L12 stalk, and near the tRNA binding site of the peptidyltransferase center. This chain is Large ribosomal subunit protein uL6, found in Dichelobacter nodosus (strain VCS1703A).